The primary structure comprises 187 residues: Dihydrofolate reductase (187 aa).

A DHFR domain is found at 4 to 185; the sequence is PLNCIVAVSQ…IKYKFEVYEK (182 aa). The tract at residues 8-37 is involved in methotrexate binding; sequence IVAVSQNMGIGKNGDFPWPMLRNEFKYFQR. Residues A10 and 16 to 22 contribute to the NADP(+) site; that span reads GIGKNGD. 31–36 is a substrate binding site; it reads EFKYFQ. K33 is modified (N6-acetyllysine; alternate). K33 carries the post-translational modification N6-succinyllysine; alternate. Position 55–57 (55–57) interacts with NADP(+); the sequence is RKT. Residues 60–70 are involved in methotrexate binding; the sequence is SIPEKNRPLKD. R71 contacts substrate. NADP(+)-binding positions include 77–79 and 117–124; these read SRE and GGSSVYKE. Residue T137 coordinates methotrexate.

It belongs to the dihydrofolate reductase family. Homodimer.

The protein resides in the mitochondrion. The protein localises to the cytoplasm. It catalyses the reaction (6S)-5,6,7,8-tetrahydrofolate + NADP(+) = 7,8-dihydrofolate + NADPH + H(+). It participates in cofactor biosynthesis; tetrahydrofolate biosynthesis; 5,6,7,8-tetrahydrofolate from 7,8-dihydrofolate: step 1/1. Key enzyme in folate metabolism. Contributes to the de novo mitochondrial thymidylate biosynthesis pathway. Catalyzes an essential reaction for de novo glycine and purine synthesis, and for DNA precursor synthesis. Binds its own mRNA. The protein is Dihydrofolate reductase (DHFR) of Mesocricetus auratus (Golden hamster).